The primary structure comprises 400 residues: ELAV-like protein 4 (400 aa).

Residues 12–48 (TMEPQVSNGPTSNTSNGPSSNSRNCPSPMQTGAATDD) are disordered. Residues 18-33 (SNGPTSNTSNGPSSNS) show a composition bias toward low complexity. A compositionally biased stretch (polar residues) spans 34–44 (RNCPSPMQTGA). RRM domains follow at residues 51–158 (TNLI…YARP), 166–246 (ANLY…FANN), and 317–395 (WCIF…FKTN).

Belongs to the RRM elav family.

The protein resides in the cytoplasm. The protein localises to the perikaryon. It localises to the cell projection. It is found in the axon. Its subcellular location is the dendrite. The protein resides in the growth cone. Its function is as follows. RNA-binding protein that is involved in the post-transcriptional regulation of mRNAs. Plays a role in the regulation of mRNA stability, alternative splicing and translation. Binds to AU-rich element (ARE) sequences in the 3' untranslated region (3'UTR) of target mRNAs. Mainly plays a role in neuron-specific RNA processing. The protein is ELAV-like protein 4 (elavl4) of Xenopus tropicalis (Western clawed frog).